Consider the following 245-residue polypeptide: Eukaryotic translation initiation factor 3 subunit K (245 aa).

Residues Tyr-46 to Asn-227 form the PCI domain.

This sequence belongs to the eIF-3 subunit K family. Component of the eukaryotic translation initiation factor 3 (eIF-3) complex.

The protein localises to the cytoplasm. Functionally, component of the eukaryotic translation initiation factor 3 (eIF-3) complex, which is involved in protein synthesis of a specialized repertoire of mRNAs and, together with other initiation factors, stimulates binding of mRNA and methionyl-tRNAi to the 40S ribosome. The eIF-3 complex specifically targets and initiates translation of a subset of mRNAs involved in cell proliferation. This chain is Eukaryotic translation initiation factor 3 subunit K, found in Botryotinia fuckeliana (strain B05.10) (Noble rot fungus).